The following is a 253-amino-acid chain: MRILLSNDDGVHAPGIQTLAKALREFADVQVVAPDRNRSGASNSLTLESSLRTFTFDNGDIAVQMGTPTDCVYLGVNALMRPRPDIVVSGINAGPNLGDDVIYSGTVAAAMEGRHLGFPALAVSLNGYQHYDTAAAVTCALLRGLSREPLRTGRILNVNVPDLPLAQVKGIRVTRCGSRHPADKVIPQEDPRGNTLYWIGPPGDKYDAGPDTDFAAVDEGYVSVTPLHVDLTAHSAHDVVSDWLDSVGVGTQW.

Residues D8, D9, S39, and N92 each contribute to the a divalent metal cation site.

This sequence belongs to the SurE nucleotidase family. A divalent metal cation serves as cofactor.

Its subcellular location is the cytoplasm. It carries out the reaction a ribonucleoside 5'-phosphate + H2O = a ribonucleoside + phosphate. The enzyme catalyses a ribonucleoside 3'-phosphate + H2O = a ribonucleoside + phosphate. The catalysed reaction is [phosphate](n) + H2O = [phosphate](n-1) + phosphate + H(+). Its function is as follows. Nucleotidase with a broad substrate specificity as it can dephosphorylate various ribo- and deoxyribonucleoside 5'-monophosphates and ribonucleoside 3'-monophosphates with highest affinity to 3'-AMP. Also hydrolyzes polyphosphate (exopolyphosphatase activity) with the preference for short-chain-length substrates (P20-25). Might be involved in the regulation of dNTP and NTP pools, and in the turnover of 3'-mononucleotides produced by numerous intracellular RNases (T1, T2, and F) during the degradation of various RNAs. The polypeptide is 5'/3'-nucleotidase SurE (Salmonella typhimurium (strain LT2 / SGSC1412 / ATCC 700720)).